Consider the following 185-residue polypeptide: Ribosome-recycling factor (185 aa).

It belongs to the RRF family.

The protein localises to the cytoplasm. In terms of biological role, responsible for the release of ribosomes from messenger RNA at the termination of protein biosynthesis. May increase the efficiency of translation by recycling ribosomes from one round of translation to another. The sequence is that of Ribosome-recycling factor from Proteus mirabilis (strain HI4320).